A 238-amino-acid polypeptide reads, in one-letter code: Orotidine 5'-phosphate decarboxylase (238 aa).

Substrate-binding positions include Asp10, Lys32, 59-68 (DLKLHDIPNT), Thr122, Arg184, Gln193, Gly213, and Arg214. Lys61 acts as the Proton donor in catalysis.

Belongs to the OMP decarboxylase family. Type 1 subfamily. In terms of assembly, homodimer.

The catalysed reaction is orotidine 5'-phosphate + H(+) = UMP + CO2. Its pathway is pyrimidine metabolism; UMP biosynthesis via de novo pathway; UMP from orotate: step 2/2. Its function is as follows. Catalyzes the decarboxylation of orotidine 5'-monophosphate (OMP) to uridine 5'-monophosphate (UMP). The chain is Orotidine 5'-phosphate decarboxylase from Bacillus anthracis (strain A0248).